The chain runs to 437 residues: Protein disulfide-isomerase tmx3a (437 aa).

Residues 1-21 (MANMRNIILTALLSAIALVSG) form the signal peptide. One can recognise a Thioredoxin domain in the interval 22–126 (YVEGLDDKFT…IIEFTNRVSG (105 aa)). Over 22 to 368 (YVEGLDDKFT…KNTVMSMVET (347 aa)) the chain is Extracellular. Active-site nucleophile residues include Cys48 and Cys51. Cysteines 48 and 51 form a disulfide. Asn308 carries N-linked (GlcNAc...) asparagine glycosylation. Residues 369 to 389 (APVFSCFVLGLPVGVVVLVIY) form a helical membrane-spanning segment. Over 390 to 437 (ATCTAVPADDEKPEEEATASPALDTHGKKAIESQPESTEKTSEAKKED) the chain is Cytoplasmic. The interval 398–437 (DDEKPEEEATASPALDTHGKKAIESQPESTEKTSEAKKED) is disordered. Positions 414–437 (THGKKAIESQPESTEKTSEAKKED) are enriched in basic and acidic residues. The short motif at 434-437 (KKED) is the Di-lysine motif element.

Its subcellular location is the endoplasmic reticulum membrane. The catalysed reaction is Catalyzes the rearrangement of -S-S- bonds in proteins.. Functionally, probable disulfide isomerase, which participates in the folding of proteins containing disulfide bonds. May act as a dithiol oxidase. Acts as a regulator of endoplasmic reticulum-mitochondria contact sites via its ability to regulate redox signals. The sequence is that of Protein disulfide-isomerase tmx3a (tmx3a) from Danio rerio (Zebrafish).